Reading from the N-terminus, the 334-residue chain is Probable quinone oxidoreductase (334 aa).

This sequence belongs to the zinc-containing alcohol dehydrogenase family. Quinone oxidoreductase subfamily.

It carries out the reaction 2 a quinone + NADPH + H(+) = 2 a 1,4-benzosemiquinone + NADP(+). The polypeptide is Probable quinone oxidoreductase (ZTA1) (Saccharomyces cerevisiae (strain ATCC 204508 / S288c) (Baker's yeast)).